The following is a 74-amino-acid chain: MSDIDRNQFLIDHEPYYRPVSNEVALYEAAYAARMPVMLKGPTGCGKTRFVEYMAWKLGKPLITVACNEDMTAS.

41-48 serves as a coordination point for ATP; it reads GPTGCGKT.

The protein belongs to the CbbQ/NirQ/NorQ/GpvN family.

In terms of biological role, may affect the post-translational activation and/or assembly of the oligomeric structure of RuBisCO. The chain is Protein CbbQ (cbbQ) from Allochromatium vinosum (Chromatium vinosum).